A 704-amino-acid chain; its full sequence is PHD finger protein MALE MEIOCYTE DEATH 1 (704 aa).

The segment at 606-656 adopts a PHD-type zinc-finger fold; the sequence is MVKCICRARDDDGERMISCDVCEVWQHTRCCGIDDSDTLPPLFVCSNCCEE. Cys609, Cys611, Cys624, Cys627, His632, Cys635, Cys650, and Cys653 together coordinate Zn(2+).

As to quaternary structure, interacts with JMJ16 in the nucleus of male meiocytes, especially on pachytene chromosomes. Expressed in inflorescence, specifically in male meiocytes.

It localises to the nucleus. Probable transcription factor required for chromosome organization and progression during male meiosis (e.g. microsporogenesis). Necessary for fertility and meiotic progressive compaction of prophase I chromosomes to metaphase I bivalents. Together with JMJ16, promotes gene expression in male meiocytes in an H3K9me3-dependent manner, and contributes to meiotic chromosome condensation by triggering some condensin promoters (e.g. CAP-D3 and CAP-H). The chain is PHD finger protein MALE MEIOCYTE DEATH 1 from Arabidopsis thaliana (Mouse-ear cress).